The primary structure comprises 1770 residues: Transposon Ty2-OR1 Gag-Pol polyprotein (1770 aa).

Composition is skewed to polar residues over residues Met1–Asn39 and Lys49–Thr60. 2 disordered regions span residues Met1–His88 and Gln359–Glu449. The interval Glu295 to His397 is RNA-binding. Low complexity predominate over residues Thr369–Arg381. 2 stretches are compositionally biased toward polar residues: residues Ile399–Val408 and Glu415–Gln435. Asp457 (for protease activity; shared with dimeric partner) is an active-site residue. An integrase-type zinc finger-like region spans residues Asn579 to Cys636. Residues Glu656 to Pro831 form the Integrase catalytic domain. 2 residues coordinate Mg(2+): Asp667 and Asp732. Composition is skewed to polar residues over residues Phe916–Asn929, Glu1009–Arg1024, and Gln1065–Ser1082. Disordered regions lie at residues Phe916 to Asp935, Gly1005 to Leu1038, and Gly1057 to Glu1205. The short motif at Lys1193–Arg1227 is the Bipartite nuclear localization signal element. The Reverse transcriptase Ty1/copia-type domain maps to Asn1353–Gln1491. Mg(2+) contacts are provided by Asp1361, Asp1442, Asp1443, Asp1625, Glu1667, and Asp1700. The RNase H Ty1/copia-type domain occupies Asp1625–Lys1767.

As to quaternary structure, the capsid protein forms a homotrimer, from which the VLPs are assembled. The protease is a homodimer, whose active site consists of two apposed aspartic acid residues. In terms of processing, initially, virus-like particles (VLPs) are composed of the structural unprocessed proteins Gag and Gag-Pol, and also contain the host initiator methionine tRNA (tRNA(i)-Met) which serves as a primer for minus-strand DNA synthesis, and a dimer of genomic Ty RNA. Processing of the polyproteins occurs within the particle and proceeds by an ordered pathway, called maturation. First, the protease (PR) is released by autocatalytic cleavage of the Gag-Pol polyprotein, and this cleavage is a prerequisite for subsequent processing at the remaining sites to release the mature structural and catalytic proteins. Maturation takes place prior to the RT reaction and is required to produce transposition-competent VLPs.

The protein resides in the cytoplasm. The protein localises to the nucleus. The enzyme catalyses DNA(n) + a 2'-deoxyribonucleoside 5'-triphosphate = DNA(n+1) + diphosphate. It catalyses the reaction Endonucleolytic cleavage to 5'-phosphomonoester.. Its function is as follows. Capsid protein (CA) is the structural component of the virus-like particle (VLP), forming the shell that encapsulates the retrotransposons dimeric RNA genome. The particles are assembled from trimer-clustered units and there are holes in the capsid shells that allow for the diffusion of macromolecules. CA also has nucleocapsid-like chaperone activity, promoting primer tRNA(i)-Met annealing to the multipartite primer-binding site (PBS), dimerization of Ty2 RNA and initiation of reverse transcription. Functionally, the aspartyl protease (PR) mediates the proteolytic cleavages of the Gag and Gag-Pol polyproteins after assembly of the VLP. Reverse transcriptase/ribonuclease H (RT) is a multifunctional enzyme that catalyzes the conversion of the retro-elements RNA genome into dsDNA within the VLP. The enzyme displays a DNA polymerase activity that can copy either DNA or RNA templates, and a ribonuclease H (RNase H) activity that cleaves the RNA strand of RNA-DNA heteroduplexes during plus-strand synthesis and hydrolyzes RNA primers. The conversion leads to a linear dsDNA copy of the retrotransposon that includes long terminal repeats (LTRs) at both ends. In terms of biological role, integrase (IN) targets the VLP to the nucleus, where a subparticle preintegration complex (PIC) containing at least integrase and the newly synthesized dsDNA copy of the retrotransposon must transit the nuclear membrane. Once in the nucleus, integrase performs the integration of the dsDNA into the host genome. The sequence is that of Transposon Ty2-OR1 Gag-Pol polyprotein (TY2B-OR1) from Saccharomyces cerevisiae (strain ATCC 204508 / S288c) (Baker's yeast).